A 669-amino-acid chain; its full sequence is Trifunctional UDP-glucose 4,6-dehydratase/UDP-4-keto-6-deoxy-D-glucose 3,5-epimerase/UDP-4-keto-L-rhamnose-reductase RHM1 (669 aa).

Residue 13 to 19 coordinates NAD(+); that stretch reads GAAGFIA. T132 is a binding site for substrate. D133 acts as the Proton donor in catalysis. Active-site proton acceptor residues include E134 and Y159. NADP(+) is bound at residue 391–397; sequence GKTGWIG.

This sequence in the N-terminal section; belongs to the NAD(P)-dependent epimerase/dehydratase family. dTDP-glucose dehydratase subfamily. The protein in the C-terminal section; belongs to the dTDP-4-dehydrorhamnose reductase family. NAD(+) is required as a cofactor. NADP(+) serves as cofactor. In terms of tissue distribution, expressed in roots, stems, leaves, seedlings, inflorescence tips, and siliques. Detected in the adaxial side of cotyledons, in the emerging leaves and in trichomes. Also detected in the root tip, more precisely in the epidermal cells in the meristematic and elongation zone.

The protein resides in the cytoplasm. It is found in the cytosol. The enzyme catalyses UDP-alpha-D-glucose = UDP-4-dehydro-6-deoxy-alpha-D-glucose + H2O. The protein operates within carbohydrate biosynthesis. Its function is as follows. Trifunctional enzyme involved in UDP-beta-L-rhamnose biosynthesis, a precursor of the primary cell wall components rhamnogalacturonan I (RG-I) and rhamnogalacturonan II (RG-II). Plays a major role in supplying UDP-rhamnose for flavonol biosynthesis. Catalyzes the dehydration of UDP-glucose to form UDP-4-dehydro-6-deoxy-D-glucose followed by the epimerization of the C3' and C5' positions of UDP-4-dehydro-6-deoxy-D-glucose to form UDP-4-keto-beta-L-rhamnose and the reduction of UDP-4-keto-beta-L-rhamnose to yield UDP-beta-L-rhamnose. The chain is Trifunctional UDP-glucose 4,6-dehydratase/UDP-4-keto-6-deoxy-D-glucose 3,5-epimerase/UDP-4-keto-L-rhamnose-reductase RHM1 from Arabidopsis thaliana (Mouse-ear cress).